A 185-amino-acid polypeptide reads, in one-letter code: MQNHDLESIKQAALIEYEVREQGSSDVLDSNISKEPLEFIIGANQIIVGLEKAVLKAQIGEWEEIVIAPEEAYGVYESGYLQEVPRDQFEGIELEKGMSVFGQTEDNQTIQATIKDFSNTHVMVDYNHPLAGKTLAFRFKVLGFREVSEEEILASHHDSGTGCCGGHGGHGGKKGGGCGCSCSHG.

The segment at 1–74 is PPIase first part; the sequence is MQNHDLESIK…IVIAPEEAYG (74 aa). The PPIase FKBP-type domain maps to 1–99; sequence MQNHDLESIK…EGIELEKGMS (99 aa). The segment at 81–125 is IF-chaperone; sequence LQEVPRDQFEGIELEKGMSVFGQTEDNQTIQATIKDFSNTHVMVD. A PPIase second part region spans residues 134–156; that stretch reads TLAFRFKVLGFREVSEEEILASH. Ni(2+)-binding residues include Cys163, Cys164, and Cys178. Residues 164–178 are compositionally biased toward gly residues; the sequence is CGGHGGHGGKKGGGC. A disordered region spans residues 164–185; it reads CGGHGGHGGKKGGGCGCSCSHG.

This sequence belongs to the FKBP-type PPIase family.

It localises to the cytoplasm. It carries out the reaction [protein]-peptidylproline (omega=180) = [protein]-peptidylproline (omega=0). In terms of biological role, folding helper with both chaperone and peptidyl-prolyl cis-trans isomerase (PPIase) activities. Chaperone activity prevents aggregation of unfolded or partially folded proteins and promotes their correct folding. PPIases catalyze the cis-trans isomerization of Xaa-Pro bonds of peptides, which accelerates slow steps of protein folding and thus shortens the lifetime of intermediates. Both strategies lower the concentration of intermediates and increase the productivity and yield of the folding reaction. Also involved in hydrogenase metallocenter assembly, probably by participating in the nickel insertion step. This function in hydrogenase biosynthesis requires chaperone activity and the presence of the metal-binding domain, but not PPIase activity. The sequence is that of FKBP-type peptidyl-prolyl cis-trans isomerase SlyD (slyD) from Helicobacter pylori (strain J99 / ATCC 700824) (Campylobacter pylori J99).